The chain runs to 433 residues: Succinate--CoA ligase [ADP-forming] subunit beta, mitochondrial (433 aa).

A mitochondrion-targeting transit peptide spans 1-23 (MLTRSVLRKAPRAFSPFLQKRNL). An ATP-grasp domain is found at 31-273 (HDILRKFGVD…ISQEDPDEAR (243 aa)). Residues K68, 75-77 (GRG), and E136 contribute to the ATP site. Mg(2+) contacts are provided by N228 and D242. Residues N293 and 350 to 352 (GIV) contribute to the substrate site.

Belongs to the succinate/malate CoA ligase beta subunit family. Heterodimer of an alpha and a beta subunit. The cofactor is Mg(2+).

The protein localises to the mitochondrion. The enzyme catalyses succinate + ATP + CoA = succinyl-CoA + ADP + phosphate. It participates in carbohydrate metabolism; tricarboxylic acid cycle; succinate from succinyl-CoA (ligase route): step 1/1. Its function is as follows. Succinyl-CoA synthetase functions in the citric acid cycle (TCA), coupling the hydrolysis of succinyl-CoA to the synthesis of ATP and thus represents the only step of substrate-level phosphorylation in the TCA. The beta subunit provides nucleotide specificity of the enzyme and binds the substrate succinate, while the binding sites for coenzyme A and phosphate are found in the alpha subunit. In Schizosaccharomyces pombe (strain 972 / ATCC 24843) (Fission yeast), this protein is Succinate--CoA ligase [ADP-forming] subunit beta, mitochondrial.